The following is a 360-amino-acid chain: Phospho-N-acetylmuramoyl-pentapeptide-transferase (360 aa).

10 helical membrane passes run 25 to 45 (RGIL…PWLI), 74 to 94 (MGGA…ADLA), 97 to 117 (YVWV…VDDY), 132 to 152 (WKYF…YMTA), 168 to 188 (IEIP…VGSS), 199 to 219 (GLAI…CYLS), 236 to 256 (SGEL…FLWF), 263 to 283 (VFMG…IAVI), 288 to 308 (VVLF…MIQV), and 338 to 358 (VIVR…ATLK).

The protein belongs to the glycosyltransferase 4 family. MraY subfamily. Mg(2+) serves as cofactor.

It is found in the cell inner membrane. The catalysed reaction is UDP-N-acetyl-alpha-D-muramoyl-L-alanyl-gamma-D-glutamyl-meso-2,6-diaminopimeloyl-D-alanyl-D-alanine + di-trans,octa-cis-undecaprenyl phosphate = di-trans,octa-cis-undecaprenyl diphospho-N-acetyl-alpha-D-muramoyl-L-alanyl-D-glutamyl-meso-2,6-diaminopimeloyl-D-alanyl-D-alanine + UMP. The protein operates within cell wall biogenesis; peptidoglycan biosynthesis. Functionally, catalyzes the initial step of the lipid cycle reactions in the biosynthesis of the cell wall peptidoglycan: transfers peptidoglycan precursor phospho-MurNAc-pentapeptide from UDP-MurNAc-pentapeptide onto the lipid carrier undecaprenyl phosphate, yielding undecaprenyl-pyrophosphoryl-MurNAc-pentapeptide, known as lipid I. This Stutzerimonas stutzeri (strain A1501) (Pseudomonas stutzeri) protein is Phospho-N-acetylmuramoyl-pentapeptide-transferase.